Here is a 37-residue protein sequence, read N- to C-terminus: Large ribosomal subunit protein bL36 (37 aa).

It belongs to the bacterial ribosomal protein bL36 family.

The protein is Large ribosomal subunit protein bL36 of Nostoc punctiforme (strain ATCC 29133 / PCC 73102).